We begin with the raw amino-acid sequence, 947 residues long: DNA polymerase (947 aa).

The protein belongs to the DNA polymerase type-B family.

The catalysed reaction is DNA(n) + a 2'-deoxyribonucleoside 5'-triphosphate = DNA(n+1) + diphosphate. This Red sea bream iridovirus (RSIV) protein is DNA polymerase.